The following is an 855-amino-acid chain: E3 ubiquitin-protein ligase TRIM71 (855 aa).

An N-acetylalanine modification is found at Ala-2. The RING-type zinc-finger motif lies at 12–94 (CLLCKEMCGS…ALKLRCPVCD (83 aa)). Over residues 26–42 (SSNSSASSSSSQTSTSS) the composition is skewed to low complexity. 2 disordered regions span residues 26–48 (SSNS…GGGP) and 127–177 (EEPP…SPGS). Over residues 135-145 (RAGGGPGGAGG) the composition is skewed to gly residues. The segment covering 147 to 157 (SNHRHHAHHPA) has biased composition (basic residues). A B box-type 1; atypical zinc finger spans residues 181 to 228 (RRPHGCSSCDEGNAASSRCLDCQEHLCDNCVRAHQRVRLTKDHYIERG). The B box-type 2 zinc finger occupies 260 to 301 (ERLGFCQHHDDEVLHLYCDTCSVPICRECTLGRHGGHSFAYL). Residues Cys-265, His-268, Cys-288, and His-293 each contribute to the Zn(2+) site. 2 coiled-coil regions span residues 314–352 (QLLA…SEVK) and 378–411 (QVKA…VLEE). The Filamin repeat unit spans residues 466-567 (SSGAFAPLTK…IENSPFKVVV (102 aa)). NHL repeat units follow at residues 580–623 (GLSF…FKPC), 627–670 (HHKF…FTFE), 674–717 (LLKF…FGPD), 721–764 (LNKY…IHPD), 768–811 (ARFL…FEAN), and 815–855 (LCKF…ILIF).

This sequence belongs to the TRIM/RBCC family. In terms of assembly, interacts (via NHL repeats) with AGO2; the interaction increases in presence of RNA. Interacts with HSP90AA1. Interacts (via NHL repeats) with MOV10, PABPC1, PUM1, PUM2, STAU2, XRN1 and XRN2 in an RNA-dependent manner. Interacts with SHCBP1; leading to enhance its stability. Autoubiquitinated. Highly expressed in undifferentiated embryonic stem cells (ESCs). Expressed in the epiblast and in interfollicular epidermal stem cells during early development. Also expressed in male germ cells and in the reproductive tract. Highly expressed in neuroepithelial cells, and its expression declines as neurogenesis proceeds (at protein level). Expressed in ependymal cells of the brain.

It localises to the cytoplasm. The protein resides in the P-body. It catalyses the reaction S-ubiquitinyl-[E2 ubiquitin-conjugating enzyme]-L-cysteine + [acceptor protein]-L-lysine = [E2 ubiquitin-conjugating enzyme]-L-cysteine + N(6)-ubiquitinyl-[acceptor protein]-L-lysine.. Its pathway is protein modification; protein ubiquitination. Functionally, E3 ubiquitin-protein ligase that cooperates with the microRNAs (miRNAs) machinery and promotes embryonic stem cells proliferation and maintenance. Binds to miRNAs and associates with AGO2, participating in post-transcriptional repression of transcripts such as CDKN1A. Facilitates the G1-S transition to promote rapid embryonic stem cell self-renewal by repressing CDKN1A expression. In addition, participates in post-transcriptional mRNA repression in a miRNA independent mechanism. Required to maintain proliferation and prevent premature differentiation of neural progenitor cells during early neural development: positively regulates FGF signaling by controlling the stability of SHCBP1. Specific regulator of miRNA biogenesis. miRNA Binds MIR29A hairpin and postranscriptionally modulates MIR29A levels, which indirectly regulates TET proteins expression. The sequence is that of E3 ubiquitin-protein ligase TRIM71 (Trim71) from Mus musculus (Mouse).